The sequence spans 194 residues: 13S globulin basic chain (194 aa).

The region spanning 13-162 (ENIKSPQEAD…SFQISSEEAE (150 aa)) is the Cupin type-1 domain.

Belongs to the 11S seed storage protein (globulins) family. Hexamer; each subunit is composed of an acidic and a basic chain derived from a single precursor and linked by a disulfide bond. As to expression, cotyledons and endosperm protein bodies.

Seed storage protein with a relatively high level of Lys and Met. The chain is 13S globulin basic chain from Fagopyrum esculentum (Common buckwheat).